A 760-amino-acid polypeptide reads, in one-letter code: 5-methyltetrahydropteroyltriglutamate--homocysteine methyltransferase (760 aa).

5-methyltetrahydropteroyltri-L-glutamate is bound by residues 17-20 (RELK) and Lys118. L-homocysteine-binding positions include 434 to 436 (IGS) and Glu487. L-methionine contacts are provided by residues 434–436 (IGS) and Glu487. 5-methyltetrahydropteroyltri-L-glutamate-binding positions include 518-519 (RC) and Trp564. Asp602 serves as a coordination point for L-homocysteine. Position 602 (Asp602) interacts with L-methionine. Glu608 is a binding site for 5-methyltetrahydropteroyltri-L-glutamate. Residues His644, Cys646, and Glu668 each coordinate Zn(2+). His697 (proton donor) is an active-site residue. Cys729 lines the Zn(2+) pocket.

It belongs to the vitamin-B12 independent methionine synthase family. It depends on Zn(2+) as a cofactor.

It carries out the reaction 5-methyltetrahydropteroyltri-L-glutamate + L-homocysteine = tetrahydropteroyltri-L-glutamate + L-methionine. It participates in amino-acid biosynthesis; L-methionine biosynthesis via de novo pathway; L-methionine from L-homocysteine (MetE route): step 1/1. Its function is as follows. Catalyzes the transfer of a methyl group from 5-methyltetrahydrofolate to homocysteine resulting in methionine formation. This chain is 5-methyltetrahydropteroyltriglutamate--homocysteine methyltransferase, found in Buchnera aphidicola subsp. Cinara cedri (strain Cc).